Consider the following 227-residue polypeptide: Phosphoribosylformylglycinamidine synthase subunit PurQ (227 aa).

Residues 3–225 form the Glutamine amidotransferase type-1 domain; that stretch reads FAVIVLPGSN…VKNWRETHVT (223 aa). Cys-86 serves as the catalytic Nucleophile. Catalysis depends on residues His-194 and Glu-196.

As to quaternary structure, part of the FGAM synthase complex composed of 1 PurL, 1 PurQ and 2 PurS subunits.

It localises to the cytoplasm. It carries out the reaction N(2)-formyl-N(1)-(5-phospho-beta-D-ribosyl)glycinamide + L-glutamine + ATP + H2O = 2-formamido-N(1)-(5-O-phospho-beta-D-ribosyl)acetamidine + L-glutamate + ADP + phosphate + H(+). The enzyme catalyses L-glutamine + H2O = L-glutamate + NH4(+). Its pathway is purine metabolism; IMP biosynthesis via de novo pathway; 5-amino-1-(5-phospho-D-ribosyl)imidazole from N(2)-formyl-N(1)-(5-phospho-D-ribosyl)glycinamide: step 1/2. Its function is as follows. Part of the phosphoribosylformylglycinamidine synthase complex involved in the purines biosynthetic pathway. Catalyzes the ATP-dependent conversion of formylglycinamide ribonucleotide (FGAR) and glutamine to yield formylglycinamidine ribonucleotide (FGAM) and glutamate. The FGAM synthase complex is composed of three subunits. PurQ produces an ammonia molecule by converting glutamine to glutamate. PurL transfers the ammonia molecule to FGAR to form FGAM in an ATP-dependent manner. PurS interacts with PurQ and PurL and is thought to assist in the transfer of the ammonia molecule from PurQ to PurL. This is Phosphoribosylformylglycinamidine synthase subunit PurQ from Bacillus subtilis (strain 168).